The chain runs to 385 residues: Chaperone protein DnaJ (385 aa).

The J domain occupies 5–70 (DYYEVLGVSK…ERKAAYDRYG (66 aa)). The segment at 143–221 (GLHKTINVPT…CNGHGRVEKD (79 aa)) adopts a CR-type zinc-finger fold. Zn(2+) contacts are provided by Cys-156, Cys-159, Cys-173, Cys-176, Cys-195, Cys-198, Cys-209, and Cys-212. CXXCXGXG motif repeat units follow at residues 156-163 (CTSCEGTG), 173-180 (CPTCSGMG), 195-202 (CPTCSGLG), and 209-216 (CKTCNGHG).

The protein belongs to the DnaJ family. As to quaternary structure, homodimer. It depends on Zn(2+) as a cofactor.

The protein resides in the cytoplasm. Its function is as follows. Participates actively in the response to hyperosmotic and heat shock by preventing the aggregation of stress-denatured proteins and by disaggregating proteins, also in an autonomous, DnaK-independent fashion. Unfolded proteins bind initially to DnaJ; upon interaction with the DnaJ-bound protein, DnaK hydrolyzes its bound ATP, resulting in the formation of a stable complex. GrpE releases ADP from DnaK; ATP binding to DnaK triggers the release of the substrate protein, thus completing the reaction cycle. Several rounds of ATP-dependent interactions between DnaJ, DnaK and GrpE are required for fully efficient folding. Also involved, together with DnaK and GrpE, in the DNA replication of plasmids through activation of initiation proteins. This chain is Chaperone protein DnaJ, found in Ruegeria sp. (strain TM1040) (Silicibacter sp.).